The primary structure comprises 238 residues: Probable transcriptional regulatory protein VIBHAR_07036 (238 aa).

The protein belongs to the TACO1 family.

Its subcellular location is the cytoplasm. The sequence is that of Probable transcriptional regulatory protein VIBHAR_07036 from Vibrio campbellii (strain ATCC BAA-1116).